Reading from the N-terminus, the 207-residue chain is 3-isopropylmalate dehydratase small subunit (207 aa).

The protein belongs to the LeuD family. LeuD type 1 subfamily. As to quaternary structure, heterodimer of LeuC and LeuD.

The catalysed reaction is (2R,3S)-3-isopropylmalate = (2S)-2-isopropylmalate. Its pathway is amino-acid biosynthesis; L-leucine biosynthesis; L-leucine from 3-methyl-2-oxobutanoate: step 2/4. In terms of biological role, catalyzes the isomerization between 2-isopropylmalate and 3-isopropylmalate, via the formation of 2-isopropylmaleate. This Acidithiobacillus ferrooxidans (strain ATCC 23270 / DSM 14882 / CIP 104768 / NCIMB 8455) (Ferrobacillus ferrooxidans (strain ATCC 23270)) protein is 3-isopropylmalate dehydratase small subunit.